The sequence spans 457 residues: Probable xyloglucan 6-xylosyltransferase 3 (457 aa).

The tract at residues 1-40 (MGKEDGFRTQKRVSTASSAAAGVLPTTMASGGVRRPPPRG) is disordered. At 1 to 51 (MGKEDGFRTQKRVSTASSAAAGVLPTTMASGGVRRPPPRGRQIQKTFNNVK) the chain is on the cytoplasmic side. The helical; Signal-anchor for type II membrane protein transmembrane segment at 52 to 71 (MTILCGFVTILVLRGTIGIN) threads the bilayer. At 72-457 (FGTSDADVVN…TTPLKIEARS (386 aa)) the chain is on the lumenal side. N-linked (GlcNAc...) asparagine glycans are attached at residues asparagine 115 and asparagine 431.

Belongs to the glycosyltransferase 34 family.

Its subcellular location is the golgi apparatus membrane. It carries out the reaction Transfers an alpha-D-xylosyl residue from UDP-D-xylose to a glucose residue in xyloglucan, forming an alpha-(1-&gt;6)-D-xylosyl-D-glucose linkage.. Probable xyloglucan xylosyltransferase involved in the biosynthesis of xyloglucan. This Arabidopsis thaliana (Mouse-ear cress) protein is Probable xyloglucan 6-xylosyltransferase 3.